The chain runs to 153 residues: Large ribosomal subunit protein uL15 (153 aa).

A disordered region spans residues 21–41 (RGIGSGKGKTGGRGIKGQKSR). Over residues 23-35 (IGSGKGKTGGRGI) the composition is skewed to gly residues.

Belongs to the universal ribosomal protein uL15 family. Part of the 50S ribosomal subunit.

Its function is as follows. Binds to the 23S rRNA. In Rickettsia rickettsii (strain Iowa), this protein is Large ribosomal subunit protein uL15.